The sequence spans 458 residues: MSGQTIFDKLWNQHVIAGQEGEPQLLYIDLHVIHEVTSPQAFQGLRDAGRSVRRRDLTYGTLDHNVPTKDIFNIQDLISKKQIDTFTKNVKEFGIPAEAHGGKGQGIVHMVAPESGRTQPGKIIVCGDSHTATNGAFGAIAFGIGTSEVEHVLATQTIWQVKPKRMKIEFQGHPQKGVYSKDFILALIAKYGVDAGVGYAVEYTGNAISDLSMEERMTICNMSIEFGAKMGLMNPDEKTYDYVKGREYAPKDFDEAVSKWEKLVSDSDAVYDKVLTLDVSQLKPMVTWGTNPGMGLEFGEEFPKINDDLNYERAYQYMDLKPGQTASDIDLGYIFIGSCTNARLGDLEEAAKIIKGNHIADGLTGIVVPGSRPVKRAAEELGLDKIFKDAGFEWREPGCSACLGMNPDQIPAYVHCASTSNRNFEGRQGHNARTHLCSPAMAAAAAISGKFVDVREIV.

Residues C339, C399, and C402 each coordinate [4Fe-4S] cluster.

The protein belongs to the aconitase/IPM isomerase family. LeuC type 1 subfamily. Heterodimer of LeuC and LeuD. The cofactor is [4Fe-4S] cluster.

It carries out the reaction (2R,3S)-3-isopropylmalate = (2S)-2-isopropylmalate. Its pathway is amino-acid biosynthesis; L-leucine biosynthesis; L-leucine from 3-methyl-2-oxobutanoate: step 2/4. Its function is as follows. Catalyzes the isomerization between 2-isopropylmalate and 3-isopropylmalate, via the formation of 2-isopropylmaleate. This chain is 3-isopropylmalate dehydratase large subunit, found in Lactococcus lactis subsp. cremoris (strain MG1363).